We begin with the raw amino-acid sequence, 78 residues long: MICOS complex subunit MIC10 (78 aa).

An N-acetylserine modification is found at Ser-2. The chain crosses the membrane as a helical span at residues 17 to 36 (AVVKIGTGFGLGIVFSLTFF). Topologically, residues 37-78 (KRRMWPLAFGSGMGLGMAYSNCQHDFQAPYLLHGKYVKEQEQ) are mitochondrial intermembrane.

The protein belongs to the MICOS complex subunit Mic10 family. In terms of assembly, component of the mitochondrial contact site and cristae organizing system (MICOS) complex, composed of at least MICOS10/MIC10, CHCHD3/MIC19, CHCHD6/MIC25, APOOL/MIC27, IMMT/MIC60, APOO/MIC23/MIC26 and MICOS13/MIC13. This complex was also known under the names MINOS or MitOS complex. The MICOS complex associates with mitochondrial outer membrane proteins SAMM50, MTX1 and MTX2 (together described as components of the mitochondrial outer membrane sorting assembly machinery (SAM) complex) and DNAJC11, mitochondrial inner membrane protein TMEM11 and with HSPA9. The MICOS and SAM complexes together with DNAJC11 are part of a large protein complex spanning both membranes termed the mitochondrial intermembrane space bridging (MIB) complex. Interacts with IMMT/MIC60 and MICOS13/MIC13. Interacts with APOO/MIC23/MIC26 and APOOL/MIC27. Interacts with ARMC1.

The protein localises to the mitochondrion inner membrane. Its function is as follows. Component of the MICOS complex, a large protein complex of the mitochondrial inner membrane that plays crucial roles in the maintenance of crista junctions, inner membrane architecture, and formation of contact sites to the outer membrane. This is MICOS complex subunit MIC10 from Homo sapiens (Human).